A 98-amino-acid chain; its full sequence is Bombyxin E-1 (98 aa).

A signal peptide spans 1–19; it reads MNRPVFLVLLLTGFLCIAA. A Pyrrolidone carboxylic acid modification is found at Gln20. 3 disulfides stabilise this stretch: Cys29-Cys85, Cys41-Cys98, and Cys84-Cys89. Positions 50 to 75 are cleaved as a propeptide — c peptide like; the sequence is SESSLASYSSRGWPWLPTPNFNKRAI.

This sequence belongs to the insulin family. In terms of assembly, heterodimer of a B chain and an A chain linked by two disulfide bonds.

The protein resides in the secreted. Its function is as follows. PTTH is a brain peptide responsible for activation of prothoracic glands to produce ecdysone in insects. In Bombyx mori (Silk moth), this protein is Bombyxin E-1 (BBXE1).